Here is a 62-residue protein sequence, read N- to C-terminus: Large ribosomal subunit protein uL30 (62 aa).

It belongs to the universal ribosomal protein uL30 family. As to quaternary structure, part of the 50S ribosomal subunit.

This chain is Large ribosomal subunit protein uL30, found in Pseudoalteromonas atlantica (strain T6c / ATCC BAA-1087).